The chain runs to 378 residues: MFKFHLITKDGKARRGRIYTPHGVIETPVFMPVGTQGTVKAMLHKLLDEIGTQIILGNTYHLYLRPGTEIIKKAGGLHRFISWNKPILTDSGGYQVFSLAKGKFGNRKAKVKVSDEGVEFQDHLQGDKHFFTPEKVVEIQEIFGSDIMMPLDECVEYPVDKNYAEKALKRTINWLERSIKAKKREDQVLFGIVQGAFWKDLRKKAVEETLKFDEFLFGYSIGGLSVGEPKEIMYGMTEVVCELLPEKKPRYLMGVGKPEDILEAVERGVDMFDCVVPTRNARTGTLYTSQGVVDIRHSKWKEDFSPLDPECDCYTCRNFSKAYLRHLFVAEEISAYVLNTIHNLRFYLKMMEEVRKAIEEKRFKELKEKYLQRVKNKL.

D90 serves as the catalytic Proton acceptor. Residues 90-94 (DSGGY), D152, Q194, and G223 each bind substrate. The RNA binding stretch occupies residues 254-260 (GVGKPED). D273 serves as the catalytic Nucleophile. The segment at 278–282 (TRNAR) is RNA binding; important for wobble base 34 recognition. 4 residues coordinate Zn(2+): C311, C313, C316, and H342.

Belongs to the queuine tRNA-ribosyltransferase family. In terms of assembly, homodimer. Within each dimer, one monomer is responsible for RNA recognition and catalysis, while the other monomer binds to the replacement base PreQ1. Zn(2+) serves as cofactor.

The catalysed reaction is 7-aminomethyl-7-carbaguanine + guanosine(34) in tRNA = 7-aminomethyl-7-carbaguanosine(34) in tRNA + guanine. It functions in the pathway tRNA modification; tRNA-queuosine biosynthesis. Its function is as follows. Catalyzes the base-exchange of a guanine (G) residue with the queuine precursor 7-aminomethyl-7-deazaguanine (PreQ1) at position 34 (anticodon wobble position) in tRNAs with GU(N) anticodons (tRNA-Asp, -Asn, -His and -Tyr). Catalysis occurs through a double-displacement mechanism. The nucleophile active site attacks the C1' of nucleotide 34 to detach the guanine base from the RNA, forming a covalent enzyme-RNA intermediate. The proton acceptor active site deprotonates the incoming PreQ1, allowing a nucleophilic attack on the C1' of the ribose to form the product. After dissociation, two additional enzymatic reactions on the tRNA convert PreQ1 to queuine (Q), resulting in the hypermodified nucleoside queuosine (7-(((4,5-cis-dihydroxy-2-cyclopenten-1-yl)amino)methyl)-7-deazaguanosine). In Aquifex aeolicus (strain VF5), this protein is Queuine tRNA-ribosyltransferase.